The sequence spans 229 residues: Stage III sporulation protein AG (229 aa).

A helical transmembrane segment spans residues 30–50 (YHYFLFVFVLGVSFMLVSQLF). Disordered stretches follow at residues 64–93 (AVSSQHSADSKEKTAEVFKASKSDKPKDSI) and 136–159 (SNKNTTTEETDKEGGKRSVTDQSS). A compositionally biased stretch (basic and acidic residues) spans 71–93 (ADSKEKTAEVFKASKSDKPKDSI).

Its subcellular location is the cell membrane. This is Stage III sporulation protein AG (spoIIIAG) from Bacillus subtilis (strain 168).